A 137-amino-acid chain; its full sequence is Basic phospholipase A2 beta-bungarotoxin A-AL4 chain (137 aa).

Positions 1 to 10 (LAVCVSLLGA) are cleaved as a signal peptide. A propeptide spanning residues 11-18 (ANIPPQHL) is cleaved from the precursor. Intrachain disulfides connect cysteine 45–cysteine 137, cysteine 47–cysteine 63, cysteine 62–cysteine 118, cysteine 69–cysteine 111, cysteine 79–cysteine 104, and cysteine 97–cysteine 109. Residues tyrosine 46, glycine 48, and glycine 50 each coordinate Ca(2+). Histidine 66 is a catalytic residue. Aspartate 67 provides a ligand contact to Ca(2+). The active site involves aspartate 112.

This sequence belongs to the phospholipase A2 family. Group I subfamily. D49 sub-subfamily. Heterodimer; disulfide-linked. The A chains have phospholipase A2 activity and the B chains show homology with the basic protease inhibitors. Ca(2+) is required as a cofactor. As to expression, expressed by the venom gland.

The protein resides in the secreted. It catalyses the reaction a 1,2-diacyl-sn-glycero-3-phosphocholine + H2O = a 1-acyl-sn-glycero-3-phosphocholine + a fatty acid + H(+). Functionally, snake venom phospholipase A2 (PLA2) that inhibits neuromuscular transmission by blocking acetylcholine release from the nerve termini. PLA2 catalyzes the calcium-dependent hydrolysis of the 2-acyl groups in 3-sn-phosphoglycerides. In Bungarus multicinctus (Many-banded krait), this protein is Basic phospholipase A2 beta-bungarotoxin A-AL4 chain.